Here is a 277-residue protein sequence, read N- to C-terminus: Release factor glutamine methyltransferase (277 aa).

Residues 117–121 (GTGTG), Asp140, Trp168, and Asn183 each bind S-adenosyl-L-methionine. 183-186 (NPPY) serves as a coordination point for substrate.

Belongs to the protein N5-glutamine methyltransferase family. PrmC subfamily.

The enzyme catalyses L-glutaminyl-[peptide chain release factor] + S-adenosyl-L-methionine = N(5)-methyl-L-glutaminyl-[peptide chain release factor] + S-adenosyl-L-homocysteine + H(+). Methylates the class 1 translation termination release factors RF1/PrfA and RF2/PrfB on the glutamine residue of the universally conserved GGQ motif. This is Release factor glutamine methyltransferase from Salmonella typhimurium (strain LT2 / SGSC1412 / ATCC 700720).